The sequence spans 311 residues: MQEIQKNTKKEQYNLNKLQKRLRRNVGEAIADFNMIEEGDRIMVCLSGGKDSYTMLEILRNLQQSAPINFSLVAVNLDQKQPGFPEHILPAYLEQLGVEYKIVEENTYGIVKEKIPEGKTTCSLCSRLRRGILYRTATELGATKIALGHHRDDILQTLFLNMFYGGKMKGMPPKLMSDDGKHIVIRPLAYCREKDIIRFAEAKAFPIIPCNLCGSQPNLQRQVIADMLRDWDKRYPGRIETMFSAMQNVVPSHLCDTNLFDFKGITHGSEVVDGGDLAFDREEIPLQPAGWQPEEDDTALEALRLDVIEVK.

Positions 47-52 match the PP-loop motif motif; the sequence is SGGKDS. Positions 122, 125, and 213 each coordinate [4Fe-4S] cluster.

The protein belongs to the TtcA family. Homodimer. Mg(2+) is required as a cofactor. [4Fe-4S] cluster serves as cofactor.

The protein resides in the cytoplasm. The enzyme catalyses cytidine(32) in tRNA + S-sulfanyl-L-cysteinyl-[cysteine desulfurase] + AH2 + ATP = 2-thiocytidine(32) in tRNA + L-cysteinyl-[cysteine desulfurase] + A + AMP + diphosphate + H(+). The protein operates within tRNA modification. In terms of biological role, catalyzes the ATP-dependent 2-thiolation of cytidine in position 32 of tRNA, to form 2-thiocytidine (s(2)C32). The sulfur atoms are provided by the cysteine/cysteine desulfurase (IscS) system. This Salmonella typhimurium (strain LT2 / SGSC1412 / ATCC 700720) protein is tRNA-cytidine(32) 2-sulfurtransferase.